The primary structure comprises 928 residues: MLLRLLSCCCWLLCSLRSSWASRNDKCGDTIKITSPSYLTSAGYPHSYPPSQRCEWLIQAPEHYQRIMINFNPHFDLEDRECKYDYVEVIDGDNANGQLLGKYCGKIAPSPLVSTGPSIFIRFVSDYETPGAGFSIRYEVFKTGPECSRNFTSSNGVIKSPKYPEKYPNALECTYIIFAPKMQEIVLEFESFELEADSNAPGGQTCRYDWLGIWDGFPGVGPHIGRYCGQNTPGRVRSFTGILSMIFHTDSAIAKEGFFANFSVVQSNTDEDFQCKEALGMESGEIHFDQISVSSQYSMNWSAERSRLNYVENGWTPGEDTVKEWIQVDLENLRFVSGIGTQGAISKETKKKYFVKSYKVDISSNGEDWITLKDGNKHLVFTGNTDATDVVYRPFSKPVITRFVRLRPVTWENGISLRFELYGCKITDYPCSRMLGMVSGLISDSQITASSQVDRNWVPELARLVTSRSGWALPPSNTHPYTKEWLQIDLAEEKIVRGVIIQGGKHKENKVFMRKFKIGYSNNGTEWEMIMDSSKNKPKTFEGNTNYDTPELRTFAHITTGFIRIIPERASASGLALRLELLGCEVETPTSIPTTPEVNGGDECEGDLANCHSGTDEGFKLTVGATGQSTETPTVEASPEEPDMTHSDLDCKFGWGSQKTVCNWQHDISSDLKWAVLNSKTGPVQDHTGDGNFIYSEADERHEGRAARLMSPVVSSSRSAHCLTFWYHMDGSHVGTLSIKLKYEMEEDFDQTLWTVSGNQGDQWKEARVVLHKTMKQYQVIVEGTVGKGSAGGIAVDDIIIANHISPSQCRAPEIDDSANKIGEEDSEIDKTGSTPNYALNEFNESISKKPGNVLKTLDPILITIIAMSALGVLLGAICGVVLYCACWHNGMSERNLSALENYNFELVDGVKLKKDKLNTQNSYSEAS.

Positions 1 to 21 (MLLRLLSCCCWLLCSLRSSWA) are cleaved as a signal peptide. The Extracellular portion of the chain corresponds to 22–860 (SRNDKCGDTI…PGNVLKTLDP (839 aa)). 3 cysteine pairs are disulfide-bonded: C27–C54, C82–C104, and C147–C173. CUB domains lie at 27 to 141 (CGDT…YEVF) and 147 to 265 (CSRN…FSVV). N-linked (GlcNAc...) asparagine glycosylation occurs at N150. The Ca(2+) site is built by E195, D209, and D250. C206 and C228 are disulfide-bonded. N261, N300, and N523 each carry an N-linked (GlcNAc...) asparagine glycan. Intrachain disulfides connect C275-C424 and C431-C584. F5/8 type C domains follow at residues 275-424 (CKEA…LYGC) and 431-584 (CSRM…LLGC). Residue S613 is glycosylated (O-linked (Xyl...) (chondroitin sulfate) serine; alternate). S613 carries an O-linked (Xyl...) (heparan sulfate) serine; alternate glycan. Residues 624–645 (GATGQSTETPTVEASPEEPDMT) form a disordered region. The segment covering 625–635 (ATGQSTETPTV) has biased composition (polar residues). The 167-residue stretch at 646–812 (HSDLDCKFGW…NHISPSQCRA (167 aa)) folds into the MAM domain. S834 carries O-linked (Xyl...) (chondroitin sulfate) serine glycosylation. N844 is a glycosylation site (N-linked (GlcNAc...) asparagine). The chain crosses the membrane as a helical span at residues 861–883 (ILITIIAMSALGVLLGAICGVVL). Residues 884–928 (YCACWHNGMSERNLSALENYNFELVDGVKLKKDKLNTQNSYSEAS) lie on the Cytoplasmic side of the membrane.

It belongs to the neuropilin family. Homodimer, and heterodimer. In terms of tissue distribution, retinal ganglion cells and visual center neurons.

The protein localises to the mitochondrion membrane. The protein resides in the cell membrane. Receptor involved in the development of the cardiovascular system, in angiogenesis, in the formation of certain neuronal circuits and in organogenesis outside the nervous system. Mediates the chemorepulsant activity of semaphorins. Binding to VEGFA initiates a signaling pathway needed for motor neuron axon guidance and cell body migration, including for the caudal migration of facial motor neurons from rhombomere 4 to rhombomere 6 during embryonic development. Regulates mitochondrial iron transport via interaction. The polypeptide is Neuropilin-1 (nrp1) (Xenopus laevis (African clawed frog)).